The sequence spans 199 residues: FMN-dependent NADH:quinone oxidoreductase 2 (199 aa).

Residues S10, 16-18, and 96-99 contribute to the FMN site; these read SVS and MYNF.

Belongs to the azoreductase type 1 family. Homodimer. The cofactor is FMN.

The catalysed reaction is 2 a quinone + NADH + H(+) = 2 a 1,4-benzosemiquinone + NAD(+). The enzyme catalyses N,N-dimethyl-1,4-phenylenediamine + anthranilate + 2 NAD(+) = 2-(4-dimethylaminophenyl)diazenylbenzoate + 2 NADH + 2 H(+). Quinone reductase that provides resistance to thiol-specific stress caused by electrophilic quinones. Functionally, also exhibits azoreductase activity. Catalyzes the reductive cleavage of the azo bond in aromatic azo compounds to the corresponding amines. The sequence is that of FMN-dependent NADH:quinone oxidoreductase 2 from Pseudomonas putida (strain ATCC 47054 / DSM 6125 / CFBP 8728 / NCIMB 11950 / KT2440).